A 251-amino-acid chain; its full sequence is MAVHLLIVDALNLIRRIHAVQGSPCVETCQHALDQLIMHSQPTHAVAVFDDENRSSGWRHQRLPDYKADRPPMPEELHDEMPALRAAFEQRGVPCWSASGNEADDLAATLAVKVTQAGHQATIVSTDKGYCQLLSPTLRIRDYFQKRWLDAPFIDKEFGVQPQQLPDYWGLAGISSSKVPGVAGIGPKSATQLLVEFQSLEGIYENLDAVAEKWRKKLETHKEMAFLCRDIARLQTDLHIDGNLQQLRLVR.

A Mg(2+)-binding site is contributed by Asp-104. The region spanning 160–249 is the 5'-3' exonuclease domain; sequence VQPQQLPDYW…IDGNLQQLRL (90 aa). Residues Leu-171, Ala-172, Pro-180, Val-182, and Ile-185 each coordinate K(+). The interaction with DNA stretch occupies residues 184-189; that stretch reads GIGPKS.

The protein belongs to the Xni family. Requires Mg(2+) as cofactor. K(+) serves as cofactor.

Its function is as follows. Has flap endonuclease activity. During DNA replication, flap endonucleases cleave the 5'-overhanging flap structure that is generated by displacement synthesis when DNA polymerase encounters the 5'-end of a downstream Okazaki fragment. This is Flap endonuclease Xni from Shigella flexneri serotype 5b (strain 8401).